We begin with the raw amino-acid sequence, 350 residues long: Methylthioribose-1-phosphate isomerase (350 aa).

Asp-241 serves as the catalytic Proton donor.

It belongs to the eIF-2B alpha/beta/delta subunits family. MtnA subfamily.

The protein localises to the cytoplasm. It localises to the nucleus. It carries out the reaction 5-(methylsulfanyl)-alpha-D-ribose 1-phosphate = 5-(methylsulfanyl)-D-ribulose 1-phosphate. The protein operates within amino-acid biosynthesis; L-methionine biosynthesis via salvage pathway; L-methionine from S-methyl-5-thio-alpha-D-ribose 1-phosphate: step 1/6. Its function is as follows. Catalyzes the interconversion of methylthioribose-1-phosphate (MTR-1-P) into methylthioribulose-1-phosphate (MTRu-1-P). This is Methylthioribose-1-phosphate isomerase from Nematostella vectensis (Starlet sea anemone).